We begin with the raw amino-acid sequence, 224 residues long: LexA repressor (224 aa).

The segment at residues methionine 41 to asparagine 61 is a DNA-binding region (H-T-H motif). Catalysis depends on for autocatalytic cleavage activity residues serine 148 and lysine 185.

This sequence belongs to the peptidase S24 family. Homodimer.

The enzyme catalyses Hydrolysis of Ala-|-Gly bond in repressor LexA.. In terms of biological role, represses a number of genes involved in the response to DNA damage (SOS response), including recA and lexA. In the presence of single-stranded DNA, RecA interacts with LexA causing an autocatalytic cleavage which disrupts the DNA-binding part of LexA, leading to derepression of the SOS regulon and eventually DNA repair. The chain is LexA repressor from Leifsonia xyli subsp. xyli (strain CTCB07).